The sequence spans 382 residues: uncharacterized protein (382 aa).

Transmembrane regions (helical) follow at residues 14 to 34 (GLLL…LWLA), 45 to 65 (VVSS…GYVI), 79 to 99 (FIFA…SWLA), 102 to 122 (FVAG…LMCS), 131 to 151 (LLAA…LLVS), 157 to 177 (LMSV…PLLF), 204 to 224 (LGVN…GLMP), 235 to 255 (ASIG…QWPI), 270 to 290 (VQVF…AMAP), 291 to 311 (ALFI…AWAC), 325 to 345 (ALLL…AMLM), and 348 to 368 (FSDN…LLML).

This sequence belongs to the major facilitator superfamily. YcaD (TC 2.A.1.26) family.

It localises to the cell inner membrane. This is an uncharacterized protein from Shigella flexneri serotype 5b (strain 8401).